The following is a 486-amino-acid chain: Matrilin-3 (486 aa).

Residues 1-28 (MPRPAPARRLPGLLLLLWPLLLLPSAAP) form the signal peptide. The segment at 32–75 (ARPGFRRLETRGPGGSPGRRPSPAAPDGAPASGTSEPGRARGAG) is disordered. Positions 49-64 (GRRPSPAAPDGAPASG) are enriched in low complexity. The VWFA domain maps to 83-258 (DLVFIIDSSR…GVIEKLSSRF (176 aa)). Position 198 is an omega-N-methylarginine (Arg-198). EGF-like domains follow at residues 264-305 (ALDP…KTCS), 306-347 (ALDR…KTCS), 348-389 (AQDK…KTCS), and 390-431 (VRDK…KTCS). Disulfide bonds link Cys-268-Cys-279, Cys-275-Cys-289, Cys-291-Cys-304, Cys-310-Cys-321, Cys-317-Cys-331, Cys-333-Cys-346, Cys-352-Cys-363, Cys-359-Cys-373, Cys-375-Cys-388, Cys-394-Cys-405, Cys-401-Cys-415, and Cys-417-Cys-430. Ser-441 carries the phosphoserine; by FAM20C modification. Thr-442 carries the post-translational modification Phosphothreonine; by FAM20C. Residues 456-480 (DKVSSYLQRLNTKLDDILEKLKINE) are a coiled coil.

Can form homooligomers (monomers, dimers, trimers and tetramers) and heterooligomers with matrilin-1. Interacts with COMP. Component of a complex containing at least CRELD2, MANF, MATN3 and PDIA4. As to expression, expressed only in cartilaginous tissues, such as vertebrae, ribs and shoulders.

Its subcellular location is the secreted. Major component of the extracellular matrix of cartilage and may play a role in the formation of extracellular filamentous networks. The chain is Matrilin-3 (MATN3) from Homo sapiens (Human).